The following is a 313-amino-acid chain: Ribosomal RNA small subunit methyltransferase I (313 aa).

The interval 1–23 is disordered; sequence MASIQLARTTRGGDGVARADGTR.

The protein belongs to the methyltransferase superfamily. RsmI family.

It is found in the cytoplasm. The catalysed reaction is cytidine(1402) in 16S rRNA + S-adenosyl-L-methionine = 2'-O-methylcytidine(1402) in 16S rRNA + S-adenosyl-L-homocysteine + H(+). Its function is as follows. Catalyzes the 2'-O-methylation of the ribose of cytidine 1402 (C1402) in 16S rRNA. This is Ribosomal RNA small subunit methyltransferase I from Micromonospora olivasterospora.